We begin with the raw amino-acid sequence, 264 residues long: Probable septum site-determining protein MinC (264 aa).

Positions 103 to 147 are disordered; the sequence is SHGRRPRGGNDAKDADRNDAQDAQGAPEHAQAAEAPASTSAIPPA. Positions 110-122 are enriched in basic and acidic residues; that stretch reads GGNDAKDADRNDA. Residues 124–147 are compositionally biased toward low complexity; it reads DAQGAPEHAQAAEAPASTSAIPPA.

The protein belongs to the MinC family. Interacts with MinD and FtsZ.

Cell division inhibitor that blocks the formation of polar Z ring septums. Rapidly oscillates between the poles of the cell to destabilize FtsZ filaments that have formed before they mature into polar Z rings. Prevents FtsZ polymerization. The sequence is that of Probable septum site-determining protein MinC from Ralstonia pickettii (strain 12J).